Reading from the N-terminus, the 605-residue chain is Glycerophosphodiester phosphodiesterase domain-containing protein 5 (605 aa).

Residues 1-42 (MVRHQPLQYYEPQLCLSCLTGIYGCRWKRYQRSHDDTTPWER) lie on the Cytoplasmic side of the membrane. Intrachain disulfides connect Cys15/Cys18 and Cys25/Cys571. The chain crosses the membrane as a helical span at residues 43-63 (LWFLLLTFTFGLTLTWLYFWW). Over 64-89 (EVHNDYDEFNWYLYNRMGYWSDWPVP) the chain is Extracellular. Residues 90 to 110 (ILVTTAAAFAYIAGLLVLALC) form a helical membrane-spanning segment. The Cytoplasmic portion of the chain corresponds to 111-125 (HIAVGQQMNLHWLHK). A helical membrane pass occupies residues 126 to 146 (IGLVVILASTVVAMSAVAQLW). The Extracellular portion of the chain corresponds to 147–160 (EDEWEVLLISLQGT). Residues 161–181 (APFLHVGAVAAVTMLSWIVAG) form a helical membrane-spanning segment. Over 182 to 192 (QFARAERTSSQ) the chain is Cytoplasmic. The chain crosses the membrane as a helical span at residues 193–213 (VTILCTFFTVVFALYLAPLTI). Residues 214 to 496 (SSPCIMEKKD…PLWIMPPDEY (283 aa)) lie on the Extracellular side of the membrane. The region spanning 228–485 (PALIGHRGAP…DNSHALSQVP (258 aa)) is the GP-PDE domain. Residues Asn301, Asn336, Asn352, Asn374, and Asn448 are each glycosylated (N-linked (GlcNAc...) asparagine). The helical transmembrane segment at 497–517 (CLMWVTADLVSFTLIVGIFVL) threads the bilayer. At 518-605 (QKWRLGGIRS…TKTLIERSGR (88 aa)) the chain is on the cytoplasmic side. Positions 582-605 (STATPVGPRGGGSHTKTLIERSGR) are disordered.

This sequence belongs to the glycerophosphoryl diester phosphodiesterase family. In terms of assembly, interacts with PRDX1; forms a mixed-disulfide with PRDX1, leading to disrupt intramolecular disulfide bond between Cys-25 and Cys-571. Post-translationally, intramolecular disulfide bond between Cys-25 and Cys-571 is reduced by PRDX1.

Its subcellular location is the endomembrane system. It localises to the cytoplasm. It is found in the perinuclear region. The protein resides in the cell projection. The protein localises to the growth cone. The enzyme catalyses a 1,2-diacyl-sn-glycero-3-phospho-(1D-myo-inositol-4,5-bisphosphate) + H2O = 1D-myo-inositol 1,4,5-trisphosphate + a 1,2-diacyl-sn-glycerol + H(+). It catalyses the reaction sn-glycerol 3-phosphocholine + H2O = sn-glycerol 3-phosphate + choline + H(+). Glycerophosphodiester phosphodiesterase that promotes neurite formation and drives spinal motor neuron differentiation. Mediates the cleavage of glycosylphosphatidylinositol (GPI) anchor of target proteins: removes the GPI-anchor of RECK, leading to release RECK from the plasma membrane. May contribute to the osmotic regulation of cellular glycerophosphocholine. This Homo sapiens (Human) protein is Glycerophosphodiester phosphodiesterase domain-containing protein 5.